We begin with the raw amino-acid sequence, 185 residues long: Segregation and condensation protein B (185 aa).

This sequence belongs to the ScpB family. In terms of assembly, homodimer. Homodimerization may be required to stabilize the binding of ScpA to the Smc head domains. Component of a cohesin-like complex composed of ScpA, ScpB and the Smc homodimer, in which ScpA and ScpB bind to the head domain of Smc. The presence of the three proteins is required for the association of the complex with DNA.

It is found in the cytoplasm. Functionally, participates in chromosomal partition during cell division. May act via the formation of a condensin-like complex containing Smc and ScpA that pull DNA away from mid-cell into both cell halves. This chain is Segregation and condensation protein B, found in Alkaliphilus oremlandii (strain OhILAs) (Clostridium oremlandii (strain OhILAs)).